The following is a 374-amino-acid chain: Glutamate 5-kinase (374 aa).

Lysine 9 is an ATP binding site. Substrate-binding residues include serine 49, aspartate 136, and asparagine 148. Residues 168-169 (TD) and 210-216 (TGGMRSK) contribute to the ATP site. Residues 276 to 354 (AGMITVDSGA…EEARQYSYLH (79 aa)) enclose the PUA domain.

This sequence belongs to the glutamate 5-kinase family.

It localises to the cytoplasm. The enzyme catalyses L-glutamate + ATP = L-glutamyl 5-phosphate + ADP. It participates in amino-acid biosynthesis; L-proline biosynthesis; L-glutamate 5-semialdehyde from L-glutamate: step 1/2. In terms of biological role, catalyzes the transfer of a phosphate group to glutamate to form L-glutamate 5-phosphate. In Geobacillus kaustophilus (strain HTA426), this protein is Glutamate 5-kinase.